The following is a 731-amino-acid chain: Gelsolin (731 aa).

Positions 2–125 (VVEHPEFLKA…YKKGGVASGF (124 aa)) are actin-severing. A Gelsolin-like 1 repeat occupies 25 to 107 (FDLVPVPPNL…VQGFESATFL (83 aa)). Tyr35 is modified (phosphotyrosine). Ca(2+) is bound by residues Gly41, Asp42, Glu73, Asp85, Gly90, and Ala92. The actin-actin interfilament contact point stretch occupies residues 72 to 75 (DESG). 111 to 118 (KSGLKYKK) is an a 1,2-diacyl-sn-glycero-3-phospho-(1D-myo-inositol-4,5-bisphosphate) binding site. Val121 provides a ligand contact to Ca(2+). 137-145 (RLLQVKGRR) is an a 1,2-diacyl-sn-glycero-3-phospho-(1D-myo-inositol-4,5-bisphosphate) binding site. A Gelsolin-like 2 repeat occupies 147 to 219 (VRATEVPVSW…FEEGAEPEAM (73 aa)). Residues Gly162 and Asp163 each contribute to the Ca(2+) site. A disulfide bridge connects residues Cys164 and Cys177. Ca(2+) contacts are provided by Glu185, Asp235, Glu278, Asp279, and Glu303. The Gelsolin-like 3 repeat unit spans residues 266–338 (DENPFAQGAL…LPEGGETPLF (73 aa)). Tyr358 and Tyr414 each carry phosphotyrosine. The actin-binding, Ca-sensitive stretch occupies residues 383 to 731 (AAQHGMDDDG…LDRALAELAA (349 aa)). Residues 404 to 485 (SNKVPVDPAT…VQGKEPAHLM (82 aa)) form a Gelsolin-like 4 repeat. 7 residues coordinate Ca(2+): Gly420, Asp421, Glu451, Asp463, Gly468, Pro470, and Thr500. Lys533 is subject to N6-acetyllysine. Residues 533-591 (KAGALNSNDAFVLKTPSAAYLWVGAGASEAEKTGAQELLRVLRAQPVQVAEGSEPDSFW) form a Gelsolin-like 5 repeat. 2 residues coordinate Ca(2+): Asn540 and Asp541. Tyr552 is subject to Phosphotyrosine. Glu563 provides a ligand contact to Ca(2+). At Tyr600 the chain carries Phosphotyrosine. Residues 630–705 (IEEVPGEFMQ…VKQGFEPPSF (76 aa)) form a Gelsolin-like 6 repeat. 3 residues coordinate Ca(2+): Asp645, Asp646, and Glu668. Thr691 is modified (phosphothreonine).

It belongs to the villin/gelsolin family. As to quaternary structure, binds to actin and to fibronectin. Identified in a complex composed of ACTA1, COBL, GSN and TMSB4X. Interacts with the inactive form of EIF2AK2/PKR. Interacts with FLII.

The protein localises to the cytoplasm. It localises to the cytoskeleton. Its function is as follows. Calcium-regulated, actin-modulating protein that binds to the plus (or barbed) ends of actin monomers or filaments, preventing monomer exchange (end-blocking or capping). It can promote the assembly of monomers into filaments (nucleation) as well as sever filaments already formed. Plays a role in ciliogenesis. The sequence is that of Gelsolin (GSN) from Equus caballus (Horse).